The sequence spans 274 residues: N-acetylmuramic acid 6-phosphate etherase (274 aa).

The SIS domain maps to 52 to 215 (IIPRMEQGGR…STSIMIRLGR (164 aa)). E80 acts as the Proton donor in catalysis. E111 is an active-site residue.

This sequence belongs to the GCKR-like family. MurNAc-6-P etherase subfamily. Homodimer.

It carries out the reaction N-acetyl-D-muramate 6-phosphate + H2O = N-acetyl-D-glucosamine 6-phosphate + (R)-lactate. Its pathway is amino-sugar metabolism; N-acetylmuramate degradation. In terms of biological role, specifically catalyzes the cleavage of the D-lactyl ether substituent of MurNAc 6-phosphate, producing GlcNAc 6-phosphate and D-lactate. This Porphyromonas gingivalis (strain ATCC BAA-308 / W83) protein is N-acetylmuramic acid 6-phosphate etherase.